A 318-amino-acid chain; its full sequence is DNA repair nuclease/redox regulator APEX1 (318 aa).

Residues 1–59 (MPKRGKKGAVVEDAEEPKTEPEAKKSKAGAKKNEKEAVGEGAVLYEDPPDQKTSPSGKS) are disordered. A necessary for interaction with YBX1, binding to RNA, association together with NPM1 to rRNA, endoribonuclease activity on abasic RNA and localization in the nucleoli region spans residues 2 to 33 (PKRGKKGAVVEDAEEPKTEPEAKKSKAGAKKN). An N6-acetyllysine; by EP300 mark is found at Lys-6 and Lys-7. Residues 8–13 (GAVVED) carry the Nuclear localization signal (NLS) motif. Residues 16-38 (EPKTEPEAKKSKAGAKKNEKEAV) show a composition bias toward basic and acidic residues. The interval 23–33 (AKKSKAGAKKN) is necessary for interaction with NPM1 and for efficient rRNA binding. N6-acetyllysine is present on residues Lys-27, Lys-31, Lys-32, and Lys-35. A Phosphoserine modification is found at Ser-54. The Nuclear export signal (NES) motif lies at 64–80 (ICSWNVDGLRAWIKKKG). Position 65 is an S-nitrosocysteine; alternate (Cys-65). The cysteines at positions 65 and 93 are disulfide-linked. Asp-70 contacts Mg(2+). S-nitrosocysteine; alternate is present on Cys-93. Glu-96 serves as a coordination point for Mg(2+). Tyr-171 is a catalytic residue. Lys-197 carries the post-translational modification N6-acetyllysine. Mg(2+)-binding residues include Asp-210 and Asn-212. The Proton donor/acceptor role is filled by Asp-210. A Phosphothreonine; by CDK5 modification is found at Thr-233. The tract at residues 289-318 (QSVLPALCDSKIRSKALGSDHCPITLYLAL) is mitochondrial targeting sequence (MTS). Asp-308 is a binding site for Mg(2+). Cys-310 carries the post-translational modification S-nitrosocysteine.

The protein belongs to the DNA repair enzymes AP/ExoA family. Monomer. Homodimer; disulfide-linked. Component of the SET complex, composed of at least APEX1, SET, ANP32A, HMGB2, NME1 and TREX1. Associates with the dimer XRCC5/XRCC6 in a DNA-dependent manner. Interacts with SIRT1; the interaction is increased in the context of genotoxic stress. Interacts with HDAC1, HDAC2 and HDAC3; the interactions are not dependent on the APEX1 acetylation status. Interacts with XRCC1; the interaction is induced by SIRT1 and increased with the APEX1 acetylated form. Interacts with NPM1 (via N-terminal domain); the interaction is RNA-dependent and decreases in hydrogen peroxide-damaged cells. Interacts (via N-terminus) with YBX1 (via C-terminus); the interaction is increased in presence of APEX1 acetylated at Lys-6 and Lys-7. Interacts with HNRNPL; the interaction is DNA-dependent. Interacts (via N-terminus) with KPNA1 and KPNA2. Interacts with TXN; the interaction stimulates the FOS/JUN AP-1 complex DNA-binding activity in a redox-dependent manner. Interacts with GZMA, KRT8, MDM2, POLB, PRDX6, PRPF19, RPLP0, TOMM20 and WDR77. Binds to CDK5. Requires Mg(2+) as cofactor. Mn(2+) serves as cofactor. Phosphorylated. Phosphorylation by kinase PKC or casein kinase CK2 results in enhanced redox activity that stimulates binding of the FOS/JUN AP-1 complex to its cognate binding site. AP-endodeoxyribonuclease activity is not affected by CK2-mediated phosphorylation. Phosphorylation of Thr-233 by CDK5 in response to MPP(+)/MPTP (1-methyl-4-phenylpyridinium) reduces AP-endodeoxyribonuclease activity resulting in accumulation of DNA damage and contributing to neuronal death. In terms of processing, acetylated on Lys-6 and Lys-7. Acetylation is increased by the transcriptional coactivator EP300 acetyltransferase, genotoxic agents like H(2)O(2) and methyl methanesulfonate (MMS). Acetylation increases its binding affinity to the negative calcium response element (nCaRE) DNA promoter. The acetylated form induces a stronger binding of YBX1 to the Y-box sequence in the MDR1 promoter than the unacetylated form. Deacetylated on lysines. Lys-6 and Lys-7 are deacetylated by SIRT1. Post-translationally, cleaved at Lys-31 by granzyme A to create the mitochondrial form; leading in reduction of binding to DNA, AP endodeoxyribonuclease activity, redox activation of transcription factors and to enhanced cell death. Cleaved by granzyme K; leading to intracellular ROS accumulation and enhanced cell death after oxidative stress. Cys-69 and Cys-93 are nitrosylated in response to nitric oxide (NO) and lead to the exposure of the nuclear export signal (NES). In terms of processing, ubiquitinated by MDM2; leading to translocation to the cytoplasm and proteasomal degradation. As to expression, the mitochondrial form is expressed in liver (at protein level). Thymus.

The protein resides in the nucleus. It is found in the nucleolus. Its subcellular location is the nucleus speckle. The protein localises to the endoplasmic reticulum. It localises to the cytoplasm. The protein resides in the mitochondrion. It carries out the reaction Exonucleolytic cleavage in the 3'- to 5'-direction to yield nucleoside 5'-phosphates.. NPM1 stimulates endodeoxyribonuclease activity on double-stranded DNA with AP sites, but inhibits endoribonuclease activity on single-stranded RNA containing AP sites. Functionally, multifunctional protein that plays a central role in the cellular response to oxidative stress. The two major activities of APEX1 are DNA repair and redox regulation of transcriptional factors. Functions as an apurinic/apyrimidinic (AP) endodeoxyribonuclease in the DNA base excision repair (BER) pathway of DNA lesions induced by oxidative and alkylating agents. Initiates repair of AP sites in DNA by catalyzing hydrolytic incision of the phosphodiester backbone immediately adjacent to the damage, generating a single-strand break with 5'-deoxyribose phosphate and 3'-hydroxyl ends. Also incises at AP sites in the DNA strand of DNA/RNA hybrids, single-stranded DNA regions of R-loop structures, and single-stranded RNA molecules. Has 3'-5' exoribonuclease activity on mismatched deoxyribonucleotides at the 3' termini of nicked or gapped DNA molecules during short-patch BER. Possesses DNA 3' phosphodiesterase activity capable of removing lesions (such as phosphoglycolate) blocking the 3' side of DNA strand breaks. May also play a role in the epigenetic regulation of gene expression by participating in DNA demethylation. Acts as a loading factor for POLB onto non-incised AP sites in DNA and stimulates the 5'-terminal deoxyribose 5'-phosphate (dRp) excision activity of POLB. Plays a role in the protection from granzyme-mediated cellular repair leading to cell death. Also involved in the DNA cleavage step of class switch recombination (CSR). On the other hand, APEX1 also exerts reversible nuclear redox activity to regulate DNA binding affinity and transcriptional activity of transcriptional factors by controlling the redox status of their DNA-binding domain, such as the FOS/JUN AP-1 complex after exposure to IR. Involved in calcium-dependent down-regulation of parathyroid hormone (PTH) expression by binding to negative calcium response elements (nCaREs). Together with HNRNPL or the dimer XRCC5/XRCC6, associates with nCaRE, acting as an activator of transcriptional repression. Stimulates the YBX1-mediated MDR1 promoter activity, when acetylated at Lys-6 and Lys-7, leading to drug resistance. Also acts as an endoribonuclease involved in the control of single-stranded RNA metabolism. Plays a role in regulating MYC mRNA turnover by preferentially cleaving in between UA and CA dinucleotides of the MYC coding region determinant (CRD). In association with NMD1, plays a role in the rRNA quality control process during cell cycle progression. Associates, together with YBX1, on the MDR1 promoter. Together with NPM1, associates with rRNA. Binds DNA and RNA. This Bos taurus (Bovine) protein is DNA repair nuclease/redox regulator APEX1 (APEX1).